We begin with the raw amino-acid sequence, 1304 residues long: Histone-lysine N-methyltransferase met-2 (1304 aa).

The segment covering Met1–Leu16 has biased composition (polar residues). Residues Met1 to Thr31 are disordered. Residues Asn97 to Glu129 adopt a coiled-coil conformation. The MBD domain maps to Phe834–Ala909. Residues Ser971–Asn1049 form the Pre-SET domain. Zn(2+) contacts are provided by Cys973, Cys975, Cys979, Cys985, Cys987, Cys1030, Cys1034, Cys1036, and Cys1041. The 226-residue stretch at Tyr1052–Gln1277 folds into the SET domain. S-adenosyl-L-methionine is bound by residues Ser1062–Trp1064, Asp1098, and Tyr1100. A compositionally biased stretch (basic and acidic residues) spans Glu1113–Asp1122. The disordered stretch occupies residues Glu1113 to Ser1201. Acidic residues predominate over residues Asp1128–Asp1144. The span at Lys1152–Arg1165 shows a compositional bias: basic and acidic residues. Basic residues predominate over residues Leu1166–Gly1178. Residues Ser1182 to Ser1201 show a composition bias toward basic and acidic residues. Residues Arg1231 and Asn1234–His1235 contribute to the S-adenosyl-L-methionine site. Residues Cys1237, Cys1290, Cys1292, and Cys1297 each contribute to the Zn(2+) site. The 17-residue stretch at Thr1286–Leu1302 folds into the Post-SET domain.

Belongs to the class V-like SAM-binding methyltransferase superfamily.

Its subcellular location is the nucleus. It is found in the chromosome. The protein resides in the cytoplasm. The enzyme catalyses N(6)-methyl-L-lysyl(9)-[histone H3] + S-adenosyl-L-methionine = N(6),N(6)-dimethyl-L-lysyl(9)-[histone H3] + S-adenosyl-L-homocysteine + H(+). It catalyses the reaction L-lysyl(9)-[histone H3] + S-adenosyl-L-methionine = N(6)-methyl-L-lysyl(9)-[histone H3] + S-adenosyl-L-homocysteine + H(+). Histone methyltransferase which is required for the mono- and dimethylation of 'Lys-9' of histone H3. This increases the efficiency of set-25-mediated trimethylation of histone H3 'Lys-9'. Involved in the transcriptional repression of lin-3 which is required for the negative regulation of vulval cell fate specification during postembryonic development. Has a role in blocking checkpoint signaling and mediating the transcriptional silencing of meiotic sex chromosome inactivation; a mechanism which enables checkpoint proteins to distinguish between the partnerless male X chromosome and asynapsed chromosomes thereby shielding the lone X from inappropriate activation of an apoptotic program. Operates redundantly with set-25 to position chromatin at the nuclear periphery. Required for small-RNA-induced H3K9 methylation. Together with set-25, protects and stabilizes repeat-rich genomic regions by suppressing transcription-induced replication stress through methylation of H3K9. Together with spr-5, required for transgenerational fertility. In Caenorhabditis elegans, this protein is Histone-lysine N-methyltransferase met-2 (met-2).